A 499-amino-acid chain; its full sequence is Glycerol kinase (499 aa).

Thr11 contributes to the ADP binding site. Thr11, Ser12, and Ser13 together coordinate ATP. Residue Thr11 coordinates sn-glycerol 3-phosphate. Arg15 provides a ligand contact to ADP. Positions 81, 82, 133, and 242 each coordinate sn-glycerol 3-phosphate. Glycerol contacts are provided by Arg81, Glu82, Tyr133, Asp242, and Gln243. Residues Thr264 and Gly309 each coordinate ADP. ATP contacts are provided by Thr264, Gly309, Gln313, and Gly414. ADP contacts are provided by Gly414 and Asn418.

The protein belongs to the FGGY kinase family.

The enzyme catalyses glycerol + ATP = sn-glycerol 3-phosphate + ADP + H(+). It functions in the pathway polyol metabolism; glycerol degradation via glycerol kinase pathway; sn-glycerol 3-phosphate from glycerol: step 1/1. With respect to regulation, inhibited by fructose 1,6-bisphosphate (FBP). In terms of biological role, key enzyme in the regulation of glycerol uptake and metabolism. Catalyzes the phosphorylation of glycerol to yield sn-glycerol 3-phosphate. This is Glycerol kinase from Methylibium petroleiphilum (strain ATCC BAA-1232 / LMG 22953 / PM1).